Here is a 555-residue protein sequence, read N- to C-terminus: Solute carrier family 22 member 2 (555 aa).

At 1–21 (MSTVDDILEHIGEFHLFQKQT) the chain is on the cytoplasmic side. Residues 22–42 (FFLLALLSGAFTPIYVGIVFL) form a helical membrane-spanning segment. At 43–150 (GFTPDHHCWS…LVCAHSWMLD (108 aa)) the chain is on the extracellular side. Asn-71 is a glycosylation site (N-linked (GlcNAc...) asparagine). The chain crosses the membrane as a helical span at residues 151–171 (LFQSVVNVGFFIGAMMIGYLA). At 172 to 177 (DRFGRK) the chain is on the cytoplasmic side. The helical transmembrane segment at 178–198 (FCLLVTILINAISGALMAISP) threads the bilayer. Over 199-210 (NYAWMLVFRFLQ) the chain is Extracellular. A helical membrane pass occupies residues 211 to 231 (GLVSKAGWLIGYILITEFVGL). The Cytoplasmic portion of the chain corresponds to 232-238 (GYRRMVG). A helical membrane pass occupies residues 239-259 (ICYQIAFTVGLLILAGVAYVI). Topologically, residues 260–263 (PNWR) are extracellular. Residues 264–284 (WLQFAVTLPNFCFLLYFWCIP) form a helical membrane-spanning segment. A Proline-rich sequence motif is present at residues 284 to 288 (PESPR). Topologically, residues 285–348 (ESPRWLISQN…VRTPQIRKHT (64 aa)) are cytoplasmic. Residues 349–369 (LILMYNWFTSSVLYQGLIMHM) form a helical membrane-spanning segment. Residues 370 to 375 (GLAGDN) are Extracellular-facing. Residues 376–396 (IYLDFFYSALVEFPAAFIIIL) form a helical membrane-spanning segment. At 397-404 (TIDRVGRR) the chain is on the cytoplasmic side. Residues 405-425 (YPWAVSNMVAGAACLASVFIP) form a helical membrane-spanning segment. At 426-432 (DDLQWLK) the chain is on the extracellular side. Residues 433-453 (ITIACLGRMGITMAYEMVCLV) form a helical membrane-spanning segment. The Cytoplasmic segment spans residues 454-464 (NAELYPTYIRN). Residues 465-485 (LGVLVCSSMCDIGGIITPFLV) traverse the membrane as a helical segment. At 486–494 (YRLTDIWME) the chain is on the extracellular side. The helical transmembrane segment at 495–515 (FPLVVFAVVGLVAGALVLLLP) threads the bilayer. Residues 516-555 (ETKGKALPETIEDAENMQRPRKKKEKRIYLQVKQADRPLS) are Cytoplasmic-facing.

The protein belongs to the major facilitator (TC 2.A.1) superfamily. Organic cation transporter (TC 2.A.1.19) family. Tyrosine phosphorylated. In terms of tissue distribution, expressed in the kidney, in the proximal tubules of cortex and of the outer medulla. In brain, highly expressed predominantly in regions located at the brain-cerebrospinal fluid border, in the leptomeninges, in the choroid plexus and in a layer boarding the third ventricle. In brain, also observed in the granular cell layer of the cerebellum and in the granular layer and pyramidal cells of the hippocampus in the CA1-CA3 regions. Expressed in tracheal and bronchial ciliated epithelium in the respiratory tract. Expression is greater in the kidney of male than of female.

It localises to the basolateral cell membrane. Its subcellular location is the basal cell membrane. The protein localises to the apical cell membrane. It carries out the reaction (R)-noradrenaline(out) = (R)-noradrenaline(in). The enzyme catalyses (R)-adrenaline(out) = (R)-adrenaline(in). The catalysed reaction is serotonin(out) = serotonin(in). It catalyses the reaction dopamine(out) = dopamine(in). It carries out the reaction histamine(out) = histamine(in). The enzyme catalyses thiamine(in) = thiamine(out). The catalysed reaction is creatinine(in) = creatinine(out). It catalyses the reaction 1-methylnicotinamide(out) = 1-methylnicotinamide(in). It carries out the reaction guanidine(out) = guanidine(in). The enzyme catalyses choline(out) = choline(in). The catalysed reaction is agmatine(out) = agmatine(in). It catalyses the reaction putrescine(out) = putrescine(in). It carries out the reaction spermidine(in) = spermidine(out). The enzyme catalyses tyramine(in) = tyramine(out). The catalysed reaction is L-histidyl-L-proline diketopiperazine(in) = L-histidyl-L-proline diketopiperazine(out). It catalyses the reaction (R)-salsolinol(in) = (R)-salsolinol(out). It carries out the reaction N-methyl-(R)-salsolinol(in) = N-methyl-(R)-salsolinol(out). The enzyme catalyses acetylcholine(in) = acetylcholine(out). The catalysed reaction is prostaglandin F2alpha(out) = prostaglandin F2alpha(in). It catalyses the reaction prostaglandin E2(out) = prostaglandin E2(in). With respect to regulation, tyrosine phosphorylation of the transporter leads to activation of the transport activity. Inhibited by cGMP, most likely through a cGMP-binding protein that interacts with OCT2. Its function is as follows. Electrogenic voltage-dependent transporter that mediates the transport of a variety of organic cations such as endogenous bioactive amines, cationic drugs and xenobiotics. Functions as a Na(+)-independent, bidirectional uniporter. Cation cellular uptake or release is driven by the electrochemical potential, i.e. membrane potential and concentration gradient. However, may also engage electroneutral cation exchange when saturating concentrations of cation substrates are reached. Predominantly expressed at the basolateral membrane of hepatocytes and proximal tubules and involved in the uptake and disposition of cationic compounds by hepatic and renal clearance from the blood flow. Implicated in monoamine neurotransmitters uptake such as histamine, dopamine, adrenaline/epinephrine, noradrenaline/norepinephrine, serotonin and tyramine, thereby supporting a physiological role in the central nervous system by regulating interstitial concentrations of neurotransmitters. Also capable of transporting dopaminergic neuromodulators cyclo(his-pro), salsolinol and N-methyl-salsolinol, thereby involved in the maintenance of dopaminergic cell integrity in the central nervous system. Mediates the bidirectional transport of acetylcholine (ACh) at the apical membrane of ciliated cell in airway epithelium, thereby playing a role in luminal release of ACh from bronchial epithelium. Also transports guanidine and endogenous monoamines such as vitamin B1/thiamine, creatinine and N-1-methylnicotinamide (NMN). Mediates the uptake and efflux of quaternary ammonium compound choline. Mediates the bidirectional transport of polyamine agmatine and the uptake of polyamine putrescine. Able to transport non-amine endogenous compounds such as prostaglandin E2 (PGE2) and prostaglandin F2-alpha (PGF2-alpha). Also involved in the uptake of xenobiotic 4-(4-(dimethylamino)styryl)-N-methylpyridinium (ASP). May contribute to regulate the transport of organic compounds in testis across the blood-testis-barrier. The sequence is that of Solute carrier family 22 member 2 from Rattus norvegicus (Rat).